We begin with the raw amino-acid sequence, 545 residues long: Glucose-6-phosphate isomerase (545 aa).

Glu-351 serves as the catalytic Proton donor. Catalysis depends on residues His-382 and Lys-510.

The protein belongs to the GPI family.

It localises to the cytoplasm. It carries out the reaction alpha-D-glucose 6-phosphate = beta-D-fructose 6-phosphate. The protein operates within carbohydrate biosynthesis; gluconeogenesis. Its pathway is carbohydrate degradation; glycolysis; D-glyceraldehyde 3-phosphate and glycerone phosphate from D-glucose: step 2/4. Catalyzes the reversible isomerization of glucose-6-phosphate to fructose-6-phosphate. The chain is Glucose-6-phosphate isomerase from Shewanella baltica (strain OS155 / ATCC BAA-1091).